A 511-amino-acid polypeptide reads, in one-letter code: Anthranilate synthase component 1 (511 aa).

The tract at residues 1-36 is disordered; it reads MTTHAAEAPTTDPQGAPGSQKTPDATEAEEAARATV. Polar residues predominate over residues 11-23; it reads TDPQGAPGSQKTP. L-tryptophan-binding positions include S84 and 292–294; that span reads PYM. 328–329 lines the chorismate pocket; sequence GT. E355 is a binding site for Mg(2+). Residues Y443, R463, 477-479, and G479 each bind chorismate; that span reads GAG. E492 contributes to the Mg(2+) binding site.

It belongs to the anthranilate synthase component I family. As to quaternary structure, heterotetramer consisting of two non-identical subunits: a beta subunit (TrpG) and a large alpha subunit (TrpE). Mg(2+) serves as cofactor.

It carries out the reaction chorismate + L-glutamine = anthranilate + pyruvate + L-glutamate + H(+). The protein operates within amino-acid biosynthesis; L-tryptophan biosynthesis; L-tryptophan from chorismate: step 1/5. Its activity is regulated as follows. Feedback inhibited by tryptophan. In terms of biological role, part of a heterotetrameric complex that catalyzes the two-step biosynthesis of anthranilate, an intermediate in the biosynthesis of L-tryptophan. In the first step, the glutamine-binding beta subunit (TrpG) of anthranilate synthase (AS) provides the glutamine amidotransferase activity which generates ammonia as a substrate that, along with chorismate, is used in the second step, catalyzed by the large alpha subunit of AS (TrpE) to produce anthranilate. In the absence of TrpG, TrpE can synthesize anthranilate directly from chorismate and high concentrations of ammonia. This is Anthranilate synthase component 1 (trpE) from Streptomyces coelicolor (strain ATCC BAA-471 / A3(2) / M145).